The following is a 468-amino-acid chain: GTPase Der (468 aa).

EngA-type G domains follow at residues 3–167 (PTLV…PYAE) and 179–352 (PVIA…TAAM). GTP-binding positions include 9–16 (GRPNVGKS), 56–60 (DTGGF), 119–122 (NKAE), 185–192 (GRPNVGKS), 232–236 (DTAGL), and 297–300 (NKWD). Residues 353–437 (AHIPTPKLTR…PLRVEFRTGH (85 aa)) form the KH-like domain. The tract at residues 434 to 468 (RTGHNPYAGKKAPPLTEEEARRAHSRRRRNRKKYG) is disordered. The segment covering 456–468 (AHSRRRRNRKKYG) has biased composition (basic residues).

The protein belongs to the TRAFAC class TrmE-Era-EngA-EngB-Septin-like GTPase superfamily. EngA (Der) GTPase family. In terms of assembly, associates with the 50S ribosomal subunit.

Functionally, GTPase that plays an essential role in the late steps of ribosome biogenesis. In Nitrosomonas eutropha (strain DSM 101675 / C91 / Nm57), this protein is GTPase Der.